The primary structure comprises 315 residues: Homoserine kinase (315 aa).

97–107 is an ATP binding site; that stretch reads PPARGLGSSAT.

The protein belongs to the GHMP kinase family. Homoserine kinase subfamily.

The protein localises to the cytoplasm. It catalyses the reaction L-homoserine + ATP = O-phospho-L-homoserine + ADP + H(+). It functions in the pathway amino-acid biosynthesis; L-threonine biosynthesis; L-threonine from L-aspartate: step 4/5. In terms of biological role, catalyzes the ATP-dependent phosphorylation of L-homoserine to L-homoserine phosphate. This is Homoserine kinase from Synechococcus sp. (strain CC9605).